We begin with the raw amino-acid sequence, 209 residues long: Translation initiation factor 2 subunit beta (209 aa).

The region spanning 144–202 (TIEEGKEYVVEITEVGSSGEGRTNYKGYTIFVPGAKRGETVKVRIKKVKNDVAIGEIIE) is the TRAM domain.

It belongs to the eIF-2-beta/eIF-5 family. As to quaternary structure, heterotrimer composed of an alpha, a beta and a gamma chain.

In terms of biological role, eIF-2 functions in the early steps of protein synthesis by forming a ternary complex with GTP and initiator tRNA. In Thermoplasma acidophilum (strain ATCC 25905 / DSM 1728 / JCM 9062 / NBRC 15155 / AMRC-C165), this protein is Translation initiation factor 2 subunit beta (eif2b).